A 977-amino-acid chain; its full sequence is Ubiquitin-like modifier-activating enzyme 7 (977 aa).

This sequence belongs to the ubiquitin-activating E1 family. Ubiquitinated by RNF170.

It localises to the cytoplasm. The protein resides in the nucleus. The protein operates within protein modification; protein ubiquitination. Its function is as follows. E1-activating enzyme that catalyzes the covalent conjugation of the ubiquitin-like protein product of ISG15 to additional interferons stimulated proteins (ISGs) as well as other cellular proteins such as P53 in a process termed protein ISGylation. Plays an essential role in antiviral immunity together with ISG15 by restricting the replication of many viruses including rabies virus, influenza virus, sindbis virus or rotavirus. The chain is Ubiquitin-like modifier-activating enzyme 7 from Mus musculus (Mouse).